Consider the following 920-residue polypeptide: Protein FAN (920 aa).

A GRAM domain is found at 176-247; that stretch reads RLARTSFDKN…QDVRRIYKRR (72 aa). Residues 189–286 enclose the BEACH-type PH domain; the sequence is SVSEKLHMEC…DRDDLYFYIA (98 aa). Positions 290 to 575 constitute a BEACH domain; the sequence is EHHAAEHTAE…QLFVTPHPRR (286 aa). WD repeat units follow at residues 631–661, 673–703, 715–743, 764–794, 806–836, and 887–917; these read IHKEAVTGIAVSCNGSSVFTTSQDSTLKMFS, FSNMALSSCLLLPGDTTVISSSWDNNVYFYS, GHDDAVSKICWHNDRLYSGSWDSTVKVWS, EHDVSVNTINLNAVSTLLVSGTKEGMVNIWD, CHSGTVCDAAFSPDSRHILSTGVDGCLNVID, and GHTGAVTCMWMNEQCSSIITGGEDRQIMFWK.

Its function is as follows. Couples the p55 TNF-receptor (TNF-R55 / TNFR1) to neutral sphingomyelinase (N-SMASE). Specifically binds to the N-smase activation domain of TNF-R55. May regulate ceramide production by N-SMASE. In Mus musculus (Mouse), this protein is Protein FAN (Nsmaf).